The primary structure comprises 661 residues: WD repeat-containing protein 26 (661 aa).

Residues 1–27 are compositionally biased toward gly residues; sequence MQANGAGGGGGGGGGGGGGGGGGGGQG. Disordered regions lie at residues 1–70 and 99–118; these read MQAN…ASNN and TAAS…KKKK. Composition is skewed to low complexity over residues 56 to 70 and 99 to 113; these read ANGL…ASNN and TAAS…LGSS. Phosphoserine occurs at positions 121 and 123. One can recognise a LisH domain in the interval 123 to 155; sequence SDEDVIRLIGQHLNGLGLNQTVDLLMQESGCRL. Residues 156–231 form the CTLH domain; it reads EHPSATKFRN…EYLEDGKVLE (76 aa). WD repeat units lie at residues 353 to 392, 399 to 438, 444 to 484, 524 to 563, 566 to 608, and 611 to 651; these read EHCN…HLLK, GHAY…GELR, SHED…DSWE, QEDH…LVRK, GVTQ…PIAE, and GHTR…DHQN.

Forms homooligomers. Identified in the CTLH complex that contains GID4, RANBP9 and/or RANBP10, MKLN1, MAEA, RMND5A (or alternatively its paralog RMND5B), GID8, ARMC8, WDR26 and YPEL5. Within this complex, MAEA, RMND5A (or alternatively its paralog RMND5B), GID8, WDR26, and RANBP9 and/or RANBP10 form the catalytic core, while GID4, MKLN1, ARMC8 and YPEL5 have ancillary roles. Interacts with DDB1-CUL4A/B E3 ligase complexes. Forms a complex composed of at least WDR26, a G-beta:gamma unit, and PLCB2. Interacts with AXIN1. In terms of tissue distribution, broadly expressed, with highest levels in heart and skeletal muscle.

Its subcellular location is the cytoplasm. The protein resides in the nucleus. The protein localises to the mitochondrion. G-beta-like protein involved in cell signal transduction. Acts as a negative regulator in MAPK signaling pathway. Functions as a scaffolding protein to promote G beta:gamma-mediated PLCB2 plasma membrane translocation and subsequent activation in leukocytes. Core component of the CTLH E3 ubiquitin-protein ligase complex that selectively accepts ubiquitin from UBE2H and mediates ubiquitination and subsequent proteasomal degradation of the transcription factor HBP1. Acts as a negative regulator of the canonical Wnt signaling pathway through preventing ubiquitination of beta-catenin CTNNB1 by the beta-catenin destruction complex, thus negatively regulating CTNNB1 degradation. Serves as a scaffold to coordinate PI3K/AKT pathway-driven cell growth and migration. Protects cells from oxidative stress-induced apoptosis via the down-regulation of AP-1 transcriptional activity as well as by inhibiting cytochrome c release from mitochondria. Also protects cells by promoting hypoxia-mediated autophagy and mitophagy. This Homo sapiens (Human) protein is WD repeat-containing protein 26 (WDR26).